The chain runs to 145 residues: D-aminoacyl-tRNA deacylase (145 aa).

The Gly-cisPro motif, important for rejection of L-amino acids motif lies at 137–138 (GP).

It belongs to the DTD family. Homodimer.

Its subcellular location is the cytoplasm. It catalyses the reaction glycyl-tRNA(Ala) + H2O = tRNA(Ala) + glycine + H(+). The catalysed reaction is a D-aminoacyl-tRNA + H2O = a tRNA + a D-alpha-amino acid + H(+). Its function is as follows. An aminoacyl-tRNA editing enzyme that deacylates mischarged D-aminoacyl-tRNAs. Also deacylates mischarged glycyl-tRNA(Ala), protecting cells against glycine mischarging by AlaRS. Acts via tRNA-based rather than protein-based catalysis; rejects L-amino acids rather than detecting D-amino acids in the active site. By recycling D-aminoacyl-tRNA to D-amino acids and free tRNA molecules, this enzyme counteracts the toxicity associated with the formation of D-aminoacyl-tRNA entities in vivo and helps enforce protein L-homochirality. The polypeptide is D-aminoacyl-tRNA deacylase (Limosilactobacillus fermentum (strain NBRC 3956 / LMG 18251) (Lactobacillus fermentum)).